The chain runs to 829 residues: Periplasmic nitrate reductase (829 aa).

The tat-type signal signal peptide spans Met-1 to Ala-29. The 57-residue stretch at Ile-41–Asp-97 folds into the 4Fe-4S Mo/W bis-MGD-type domain. 4 residues coordinate [4Fe-4S] cluster: Cys-48, Cys-51, Cys-55, and Cys-83. Residues Lys-85, Gln-152, Asn-177, Cys-181, Trp-214–Met-221, Ser-245–His-249, Gln-264–Asp-266, Met-374, Gln-378, Asn-484, Ser-510–Asp-511, Lys-533, Asp-560, and Thr-718–Thr-727 each bind Mo-bis(molybdopterin guanine dinucleotide). Phe-794 contributes to the substrate binding site. The Mo-bis(molybdopterin guanine dinucleotide) site is built by Asn-802 and Lys-819.

This sequence belongs to the prokaryotic molybdopterin-containing oxidoreductase family. NasA/NapA/NarB subfamily. Component of the periplasmic nitrate reductase NapAB complex composed of NapA and NapB. It depends on [4Fe-4S] cluster as a cofactor. Requires Mo-bis(molybdopterin guanine dinucleotide) as cofactor. Predicted to be exported by the Tat system. The position of the signal peptide cleavage has not been experimentally proven.

Its subcellular location is the periplasm. The enzyme catalyses 2 Fe(II)-[cytochrome] + nitrate + 2 H(+) = 2 Fe(III)-[cytochrome] + nitrite + H2O. In terms of biological role, catalytic subunit of the periplasmic nitrate reductase complex NapAB. Receives electrons from NapB and catalyzes the reduction of nitrate to nitrite. This is Periplasmic nitrate reductase from Aliivibrio fischeri (strain MJ11) (Vibrio fischeri).